The primary structure comprises 393 residues: Phosphoglycerate kinase (393 aa).

Residues 21–23 (DLN), Arg36, 59–62 (HLGR), Arg113, and Arg146 contribute to the substrate site. ATP is bound by residues Lys197, Glu319, and 345–348 (GGDT).

It belongs to the phosphoglycerate kinase family. As to quaternary structure, monomer.

The protein resides in the cytoplasm. It carries out the reaction (2R)-3-phosphoglycerate + ATP = (2R)-3-phospho-glyceroyl phosphate + ADP. It functions in the pathway carbohydrate degradation; glycolysis; pyruvate from D-glyceraldehyde 3-phosphate: step 2/5. The chain is Phosphoglycerate kinase from Nitratidesulfovibrio vulgaris (strain DP4) (Desulfovibrio vulgaris).